We begin with the raw amino-acid sequence, 131 residues long: Large ribosomal subunit protein bL17 (131 aa).

This sequence belongs to the bacterial ribosomal protein bL17 family. Part of the 50S ribosomal subunit. Contacts protein L32.

The sequence is that of Large ribosomal subunit protein bL17 from Finegoldia magna (strain ATCC 29328 / DSM 20472 / WAL 2508) (Peptostreptococcus magnus).